Here is a 618-residue protein sequence, read N- to C-terminus: Dihydroxy-acid dehydratase 1 (618 aa).

A Mg(2+)-binding site is contributed by aspartate 81. Residue cysteine 122 participates in [2Fe-2S] cluster binding. Mg(2+) contacts are provided by aspartate 123 and lysine 124. Lysine 124 is subject to N6-carboxylysine. A [2Fe-2S] cluster-binding site is contributed by cysteine 195. Residue glutamate 491 participates in Mg(2+) binding. The active-site Proton acceptor is serine 517.

The protein belongs to the IlvD/Edd family. As to quaternary structure, homodimer. It depends on [2Fe-2S] cluster as a cofactor. Mg(2+) is required as a cofactor.

It carries out the reaction (2R)-2,3-dihydroxy-3-methylbutanoate = 3-methyl-2-oxobutanoate + H2O. The catalysed reaction is (2R,3R)-2,3-dihydroxy-3-methylpentanoate = (S)-3-methyl-2-oxopentanoate + H2O. It participates in amino-acid biosynthesis; L-isoleucine biosynthesis; L-isoleucine from 2-oxobutanoate: step 3/4. The protein operates within amino-acid biosynthesis; L-valine biosynthesis; L-valine from pyruvate: step 3/4. Functions in the biosynthesis of branched-chain amino acids. Catalyzes the dehydration of (2R,3R)-2,3-dihydroxy-3-methylpentanoate (2,3-dihydroxy-3-methylvalerate) into 2-oxo-3-methylpentanoate (2-oxo-3-methylvalerate) and of (2R)-2,3-dihydroxy-3-methylbutanoate (2,3-dihydroxyisovalerate) into 2-oxo-3-methylbutanoate (2-oxoisovalerate), the penultimate precursor to L-isoleucine and L-valine, respectively. The chain is Dihydroxy-acid dehydratase 1 from Pseudoalteromonas translucida (strain TAC 125).